A 328-amino-acid polypeptide reads, in one-letter code: Cytochrome c biogenesis protein CcsA (328 aa).

The next 8 membrane-spanning stretches (helical) occupy residues 13–33 (ISFS…LVNL), 46–66 (GIII…IYSG), 73–93 (LYES…VSYF), 101–121 (LNAI…SGLL), 146–166 (MILG…LLVI), 234–254 (IISL…VWAN), 263–283 (WDPK…YLHI), and 295–315 (AIVA…VNLL).

Belongs to the CcmF/CycK/Ccl1/NrfE/CcsA family. May interact with Ccs1.

The protein resides in the plastid. The protein localises to the chloroplast thylakoid membrane. Its function is as follows. Required during biogenesis of c-type cytochromes (cytochrome c6 and cytochrome f) at the step of heme attachment. The chain is Cytochrome c biogenesis protein CcsA from Capsella bursa-pastoris (Shepherd's purse).